Reading from the N-terminus, the 750-residue chain is Methylmalonyl-CoA mutase, mitochondrial (750 aa).

The transit peptide at 1-32 (MLRAKNQLFLLSPHYLKQVKESSGSRLIQQRL) directs the protein to the mitochondrion. A malonyl-CoA-binding site is contributed by glutamine 50. N6-acetyllysine is present on lysine 89. Malonyl-CoA contacts are provided by residues 96–99 (YPTM) and 106–110 (TIRQY). Lysine 212 carries the N6-acetyllysine modification. Residues 216–218 (TIQ), arginine 228, lysine 255, histidine 265, and 304–306 (RLS) contribute to the malonyl-CoA site. Position 335 is an N6-acetyllysine (lysine 335). N6-succinyllysine is present on lysine 343. Serine 481 is subject to Phosphoserine. The residue at position 595 (lysine 595) is an N6-succinyllysine. Lysine 602 carries the post-translational modification N6-acetyllysine. One can recognise a B12-binding domain in the interval 614-746 (RPRLLVAKMG…DDIEKCLEKK (133 aa)). Histidine 627 serves as a coordination point for adenosylcob(III)alamin.

This sequence belongs to the methylmalonyl-CoA mutase family. In terms of assembly, homodimer. Interacts (the apoenzyme form) with MMAA; the interaction is GTP dependent. Requires adenosylcob(III)alamin as cofactor.

It localises to the mitochondrion matrix. The protein resides in the mitochondrion. It is found in the cytoplasm. The catalysed reaction is (R)-methylmalonyl-CoA = succinyl-CoA. Inhibited by itaconyl-CoA, a metabolite that inactivates the coenzyme B12 cofactor. Its function is as follows. Catalyzes the reversible isomerization of methylmalonyl-CoA (MMCoA) (generated from branched-chain amino acid metabolism and degradation of dietary odd chain fatty acids and cholesterol) to succinyl-CoA (3-carboxypropionyl-CoA), a key intermediate of the tricarboxylic acid cycle. This is Methylmalonyl-CoA mutase, mitochondrial (MMUT) from Pongo abelii (Sumatran orangutan).